Here is a 279-residue protein sequence, read N- to C-terminus: Pantothenate synthetase (279 aa).

26–33 (MGNLHEGH) contributes to the ATP binding site. Histidine 33 acts as the Proton donor in catalysis. Glutamine 57 provides a ligand contact to (R)-pantoate. Glutamine 57 serves as a coordination point for beta-alanine. Position 144–147 (144–147 (GKKD)) interacts with ATP. Glutamine 150 lines the (R)-pantoate pocket. ATP contacts are provided by residues valine 173 and 181 to 184 (LSSR).

It belongs to the pantothenate synthetase family. As to quaternary structure, homodimer.

It localises to the cytoplasm. It carries out the reaction (R)-pantoate + beta-alanine + ATP = (R)-pantothenate + AMP + diphosphate + H(+). The protein operates within cofactor biosynthesis; (R)-pantothenate biosynthesis; (R)-pantothenate from (R)-pantoate and beta-alanine: step 1/1. In terms of biological role, catalyzes the condensation of pantoate with beta-alanine in an ATP-dependent reaction via a pantoyl-adenylate intermediate. This Burkholderia vietnamiensis (strain G4 / LMG 22486) (Burkholderia cepacia (strain R1808)) protein is Pantothenate synthetase.